Consider the following 404-residue polypeptide: Cysteine desulfurase IscS (404 aa).

Pyridoxal 5'-phosphate is bound by residues 75-76, Asn155, Gln183, and 203-205; these read AT and SAH. Lys206 is subject to N6-(pyridoxal phosphate)lysine. Thr243 serves as a coordination point for pyridoxal 5'-phosphate. Catalysis depends on Cys328, which acts as the Cysteine persulfide intermediate. Cys328 contacts [2Fe-2S] cluster.

It belongs to the class-V pyridoxal-phosphate-dependent aminotransferase family. NifS/IscS subfamily. In terms of assembly, homodimer. Forms a heterotetramer with IscU, interacts with other sulfur acceptors. The cofactor is pyridoxal 5'-phosphate.

It is found in the cytoplasm. The catalysed reaction is (sulfur carrier)-H + L-cysteine = (sulfur carrier)-SH + L-alanine. The protein operates within cofactor biosynthesis; iron-sulfur cluster biosynthesis. In terms of biological role, master enzyme that delivers sulfur to a number of partners involved in Fe-S cluster assembly, tRNA modification or cofactor biosynthesis. Catalyzes the removal of elemental sulfur atoms from cysteine to produce alanine. Functions as a sulfur delivery protein for Fe-S cluster synthesis onto IscU, an Fe-S scaffold assembly protein, as well as other S acceptor proteins. The polypeptide is Cysteine desulfurase IscS (Vibrio cholerae serotype O1 (strain M66-2)).